A 671-amino-acid polypeptide reads, in one-letter code: Alpha-1,4-glucan:maltose-1-phosphate maltosyltransferase (671 aa).

Lys-252, Gln-312, and Asp-347 together coordinate alpha-maltose 1-phosphate. Asp-382 functions as the Nucleophile in the catalytic mechanism. Asn-383 is an alpha-maltose 1-phosphate binding site. The Proton donor role is filled by Glu-411. 521–522 is a binding site for alpha-maltose 1-phosphate; sequence KY.

The protein belongs to the glycosyl hydrolase 13 family. GlgE subfamily. In terms of assembly, homodimer.

The enzyme catalyses alpha-maltose 1-phosphate + [(1-&gt;4)-alpha-D-glucosyl](n) = [(1-&gt;4)-alpha-D-glucosyl](n+2) + phosphate. Maltosyltransferase that uses maltose 1-phosphate (M1P) as the sugar donor to elongate linear or branched alpha-(1-&gt;4)-glucans. Is involved in a branched alpha-glucan biosynthetic pathway from trehalose, together with TreS, Mak and GlgB. The sequence is that of Alpha-1,4-glucan:maltose-1-phosphate maltosyltransferase from Corynebacterium pseudotuberculosis (strain 1002).